A 218-amino-acid chain; its full sequence is Peptide methionine sulfoxide reductase MsrA (218 aa).

Cys57 is an active-site residue.

It belongs to the MsrA Met sulfoxide reductase family.

It carries out the reaction L-methionyl-[protein] + [thioredoxin]-disulfide + H2O = L-methionyl-(S)-S-oxide-[protein] + [thioredoxin]-dithiol. The enzyme catalyses [thioredoxin]-disulfide + L-methionine + H2O = L-methionine (S)-S-oxide + [thioredoxin]-dithiol. Functionally, has an important function as a repair enzyme for proteins that have been inactivated by oxidation. Catalyzes the reversible oxidation-reduction of methionine sulfoxide in proteins to methionine. The sequence is that of Peptide methionine sulfoxide reductase MsrA from Brucella anthropi (Ochrobactrum anthropi).